The sequence spans 300 residues: Glucose and ribitol dehydrogenase homolog (300 aa).

The span at 1–14 (MASQQFPPQNQETQ) shows a compositional bias: polar residues. A disordered region spans residues 1-23 (MASQQFPPQNQETQPGKEHAMDP). 44 to 68 (IVTGGDSGIGRAVCLCFALEGATVA) lines the NAD(+) pocket. Position 192 (Ser-192) interacts with substrate. Tyr-205 serves as the catalytic Proton acceptor.

This sequence belongs to the short-chain dehydrogenases/reductases (SDR) family.

Its function is as follows. May act as a short alcohol-polyol-sugar dehydrogenase possibly related to carbohydrate metabolism and the acquisition of desiccation tolerance. May also be involved in signal transduction. The polypeptide is Glucose and ribitol dehydrogenase homolog (Oryza sativa subsp. japonica (Rice)).